Here is a 207-residue protein sequence, read N- to C-terminus: MEITEIKVKKRDKIGKQFAKKYRRSNLIPGVVYGAHLKENIHILVEKKDLWSLIKKGHAKEQHLLRLIIENGENTITENAILQDLQIDPIKDEFLHVDFHAITLEELVDVYVPILLVGEAKGIKQGGILQHGVEEILIRALPLDVPPHIEVDITDLEIGESITVGDLKFPENIKVLTPLDEVVVGIIPPKGYTEEVTTGEAQTESQT.

It belongs to the bacterial ribosomal protein bL25 family. CTC subfamily. In terms of assembly, part of the 50S ribosomal subunit; part of the 5S rRNA/L5/L18/L25 subcomplex. Contacts the 5S rRNA. Binds to the 5S rRNA independently of L5 and L18.

This is one of the proteins that binds to the 5S RNA in the ribosome where it forms part of the central protuberance. The chain is Large ribosomal subunit protein bL25 from Dictyoglomus turgidum (strain DSM 6724 / Z-1310).